Reading from the N-terminus, the 354-residue chain is Divinyl chlorophyll a/b light-harvesting protein PcbF (354 aa).

A run of 6 helical transmembrane segments spans residues 27 to 47 (FIASHAAHTGMIAFGAGSNTL), 88 to 108 (VVTLAILHLILSMVYGAGGLL), 140 to 160 (FILGHHLILFGLACAWFVEWA), 201 to 221 (VMGGHAFLAFAEITGGCFHAI), 248 to 268 (AILSFSLAGIGWMAIVAAFWC), and 315 to 335 (TANFHYIAGFFAFQGHLWHAL).

It belongs to the PsbB/PsbC family. IsiA/Pcb subfamily. In terms of assembly, the antenna complex consists of divinyl chlorophylls (a and b) and divinyl chlorophyll a/b binding proteins and binds more divinyl chlorophyll b than does the antenna complex from high-light-adapted Prochlorococcus. Divinyl chlorophyll a is required as a cofactor. Requires divinyl chlorophyll b as cofactor.

It is found in the cellular thylakoid membrane. Functionally, the antenna complex functions as a light receptor, it captures and delivers excitation energy to photosystems II and I. The Prochlorales pcb genes are not related to higher plant LHCs. The protein is Divinyl chlorophyll a/b light-harvesting protein PcbF (pcbF) of Prochlorococcus marinus (strain SARG / CCMP1375 / SS120).